A 336-amino-acid chain; its full sequence is uncharacterized protein (336 aa).

Positions Met1–Ala33 are cleaved as a signal peptide.

This is an uncharacterized protein from Sinorhizobium fredii (strain NBRC 101917 / NGR234).